The primary structure comprises 206 residues: Holliday junction branch migration complex subunit RuvA (206 aa).

A domain I region spans residues 1–64 (MIGRLTGNLV…ETSQQLFGFI (64 aa)). The tract at residues 65-142 (DQQDREFFRM…SWQVTPSVDA (78 aa)) is domain II. A flexible linker region spans residues 143–154 (TGSLVALDSAAP). The segment at 155–206 (SQNAIVAEAESALVALGYKPVEASKAVARVTSDEITRSEDLIRLALRNMIPA) is domain III.

Belongs to the RuvA family. In terms of assembly, homotetramer. Forms an RuvA(8)-RuvB(12)-Holliday junction (HJ) complex. HJ DNA is sandwiched between 2 RuvA tetramers; dsDNA enters through RuvA and exits via RuvB. An RuvB hexamer assembles on each DNA strand where it exits the tetramer. Each RuvB hexamer is contacted by two RuvA subunits (via domain III) on 2 adjacent RuvB subunits; this complex drives branch migration. In the full resolvosome a probable DNA-RuvA(4)-RuvB(12)-RuvC(2) complex forms which resolves the HJ.

The protein resides in the cytoplasm. The RuvA-RuvB-RuvC complex processes Holliday junction (HJ) DNA during genetic recombination and DNA repair, while the RuvA-RuvB complex plays an important role in the rescue of blocked DNA replication forks via replication fork reversal (RFR). RuvA specifically binds to HJ cruciform DNA, conferring on it an open structure. The RuvB hexamer acts as an ATP-dependent pump, pulling dsDNA into and through the RuvAB complex. HJ branch migration allows RuvC to scan DNA until it finds its consensus sequence, where it cleaves and resolves the cruciform DNA. The sequence is that of Holliday junction branch migration complex subunit RuvA from Teredinibacter turnerae (strain ATCC 39867 / T7901).